We begin with the raw amino-acid sequence, 448 residues long: Phosphoglucosamine mutase (448 aa).

Catalysis depends on Ser104, which acts as the Phosphoserine intermediate. Ser104, Asp243, Asp245, and Asp247 together coordinate Mg(2+). Ser104 is modified (phosphoserine).

It belongs to the phosphohexose mutase family. Mg(2+) is required as a cofactor. Activated by phosphorylation.

The enzyme catalyses alpha-D-glucosamine 1-phosphate = D-glucosamine 6-phosphate. Catalyzes the conversion of glucosamine-6-phosphate to glucosamine-1-phosphate. In Xylella fastidiosa (strain Temecula1 / ATCC 700964), this protein is Phosphoglucosamine mutase.